We begin with the raw amino-acid sequence, 349 residues long: uncharacterized protein (349 aa).

The N-terminal stretch at 1–29 (MKQKYENYFKKRLILNLLIFLLLACSSES) is a signal peptide.

This is an uncharacterized protein from Borreliella burgdorferi (strain ATCC 35210 / DSM 4680 / CIP 102532 / B31) (Borrelia burgdorferi).